We begin with the raw amino-acid sequence, 368 residues long: Agmatine deiminase (368 aa).

C357 serves as the catalytic Amidino-cysteine intermediate.

Belongs to the agmatine deiminase family. Homodimer.

It catalyses the reaction agmatine + H2O = N-carbamoylputrescine + NH4(+). It participates in amine and polyamine biosynthesis; putrescine biosynthesis via agmatine pathway; N-carbamoylputrescine from agmatine: step 1/1. Its function is as follows. Mediates the hydrolysis of agmatine into N-carbamoylputrescine in the arginine decarboxylase (ADC) pathway of putrescine biosynthesis, a basic polyamine. The polypeptide is Agmatine deiminase (Pseudomonas putida (strain ATCC 700007 / DSM 6899 / JCM 31910 / BCRC 17059 / LMG 24140 / F1)).